Here is a 182-residue protein sequence, read N- to C-terminus: ATP synthase subunit b 1 (182 aa).

A helical membrane pass occupies residues 24–44 (FADPAFWVSIAFLMVVGFVYI).

This sequence belongs to the ATPase B chain family. F-type ATPases have 2 components, F(1) - the catalytic core - and F(0) - the membrane proton channel. F(1) has five subunits: alpha(3), beta(3), gamma(1), delta(1), epsilon(1). F(0) has three main subunits: a(1), b(2) and c(10-14). The alpha and beta chains form an alternating ring which encloses part of the gamma chain. F(1) is attached to F(0) by a central stalk formed by the gamma and epsilon chains, while a peripheral stalk is formed by the delta and b chains.

Its subcellular location is the cell inner membrane. F(1)F(0) ATP synthase produces ATP from ADP in the presence of a proton or sodium gradient. F-type ATPases consist of two structural domains, F(1) containing the extramembraneous catalytic core and F(0) containing the membrane proton channel, linked together by a central stalk and a peripheral stalk. During catalysis, ATP synthesis in the catalytic domain of F(1) is coupled via a rotary mechanism of the central stalk subunits to proton translocation. Functionally, component of the F(0) channel, it forms part of the peripheral stalk, linking F(1) to F(0). This is ATP synthase subunit b 1 from Rhodospirillum rubrum (strain ATCC 11170 / ATH 1.1.1 / DSM 467 / LMG 4362 / NCIMB 8255 / S1).